The primary structure comprises 416 residues: Serine hydroxymethyltransferase (416 aa).

(6S)-5,6,7,8-tetrahydrofolate is bound by residues leucine 121 and 125-127; that span reads GHL. The residue at position 230 (lysine 230) is an N6-(pyridoxal phosphate)lysine.

This sequence belongs to the SHMT family. In terms of assembly, homodimer. Pyridoxal 5'-phosphate serves as cofactor.

The protein localises to the cytoplasm. It carries out the reaction (6R)-5,10-methylene-5,6,7,8-tetrahydrofolate + glycine + H2O = (6S)-5,6,7,8-tetrahydrofolate + L-serine. The protein operates within one-carbon metabolism; tetrahydrofolate interconversion. It functions in the pathway amino-acid biosynthesis; glycine biosynthesis; glycine from L-serine: step 1/1. Functionally, catalyzes the reversible interconversion of serine and glycine with tetrahydrofolate (THF) serving as the one-carbon carrier. This reaction serves as the major source of one-carbon groups required for the biosynthesis of purines, thymidylate, methionine, and other important biomolecules. Also exhibits THF-independent aldolase activity toward beta-hydroxyamino acids, producing glycine and aldehydes, via a retro-aldol mechanism. In Nitrosospira multiformis (strain ATCC 25196 / NCIMB 11849 / C 71), this protein is Serine hydroxymethyltransferase.